The chain runs to 308 residues: MDFASGLPIFIVTLREALEASLVVGIVLACLARAQQMQLKGWVYRGISAGVVASVLVGCLLAGVLQGVERLPGPYTPILKALLAALLGAIAVGMLSWMLLWMTKQARSLRGEIQGQINQAVEKEGGGKAIAIVVFIAVVREGFEMVLFLAAQQNMANPAAIGAALAGIGTAVVMAFLIFRLGVKLNLKLFFQVMGTLLLIIVGGLVIGVLKNLDLAVSMMGLANLGLGYLCFVPGDSCLLGPLLWNLAPWLPDNQFPGIVLKTLAGYRDHLYLFQAIAYGIFLSVIGSLYFRGLAGKGDAPQAVAQKS.

Helical transmembrane passes span 46–66, 82–102, 159–179, 190–210, and 271–291; these read GISA…GVLQ, LLAA…LLWM, AAIG…FLIF, FFQV…IGVL, and LYLF…SLYF.

This sequence belongs to the oxidase-dependent Fe transporter (OFeT) (TC 9.A.10.1) family.

It is found in the cell membrane. This is an uncharacterized protein from Synechocystis sp. (strain ATCC 27184 / PCC 6803 / Kazusa).